Reading from the N-terminus, the 125-residue chain is Morphine 6-dehydrogenase (125 aa).

NADP(+) is bound by residues G9–I18 and S74–E111.

Belongs to the aldo/keto reductase family. Monomer. The N-terminus is blocked.

The protein resides in the cytoplasm. The enzyme catalyses morphine + NAD(+) = morphinone + NADH + H(+). It catalyses the reaction morphine + NADP(+) = morphinone + NADPH + H(+). Strongly inhibited by sulfhydryl reagents and quercetin, but not by pyrazole, barbital and indomethacine. In terms of biological role, catalyzes the dehydrogenation of morphine to morphinone. Uses both NAD and NADP, but the activity is much greater with NAD than with NADP. The sequence is that of Morphine 6-dehydrogenase from Oryctolagus cuniculus (Rabbit).